Consider the following 401-residue polypeptide: cAMP-dependent protein kinase type II-alpha regulatory subunit (401 aa).

Ser2 bears the N-acetylserine mark. A dimerization and phosphorylation region spans residues 2–135; the sequence is SHIQIPPGLT…RLQEACKDIL (134 aa). Residues 43-65 form a disordered region; it reads ARSRASTPPAAPPSGSQDFDPGA. The span at 46 to 58 shows a compositional bias: low complexity; it reads RASTPPAAPPSGS. Residues Ser48, Ser75, and Ser77 each carry the phosphoserine modification. Phosphoserine; by PKA is present on Ser96. Residues 136–257, Glu205, Arg214, 258–401, Glu335, and Arg344 each bind 3',5'-cyclic AMP; these read LFKN…ESVP and LLKS…DPGQ. Thr212 bears the Phosphothreonine; by PDPK1 mark. 2 positions are modified to phosphoserine: Ser347 and Ser392.

It belongs to the cAMP-dependent kinase regulatory chain family. The inactive form of the enzyme is composed of two regulatory chains and two catalytic chains. Activation by cAMP produces two active catalytic monomers and a regulatory dimer that binds four cAMP molecules. Interacts with AKAP4 and CBFA2T3. Interacts with the phosphorylated form of PJA2. Interacts with MYRIP; this interaction may link PKA to components of the exocytosis machinery, thus facilitating exocytosis, including insulin release. Forms a complex composed of PRKAR2A, GSK3B and GSKIP through GSKIP interaction; facilitates PKA-induced phosphorylation and regulates GSK3B activity. Interacts with ADCY8; inhibits adenylate cyclase activity through PKA phosphorylation. A second phosphorylation site has not been located. Post-translationally, phosphorylation of Thr-212 by PDPK1 seems to attenuate the activity of PKA, perhaps by strengthening interaction between the regulatory and the catalytic subunits. Four types of regulatory chains are found: I-alpha, I-beta, II-alpha, and II-beta. Their expression varies among tissues and is in some cases constitutive and in others inducible.

It is found in the cytoplasm. The protein localises to the cell membrane. Regulatory subunit of the cAMP-dependent protein kinases involved in cAMP signaling in cells. Type II regulatory chains mediate membrane association by binding to anchoring proteins, including the MAP2 kinase. This Bos taurus (Bovine) protein is cAMP-dependent protein kinase type II-alpha regulatory subunit (PRKAR2A).